Consider the following 2183-residue polypeptide: Coagulation factor V (2183 aa).

Residues 1–19 (MLLVCPCFFLLVVLGTRWA) form the signal peptide. Plastocyanin-like domains lie at 30-192 (QLRQ…LLIC), 202-328 (TQKM…IKNC), 347-524 (KRWE…LLIC), and 534-682 (VQRV…DVKC). F5/8 type A domains follow at residues 30 to 328 (QLRQ…IKNC) and 347 to 682 (KRWE…DVKC). Ca(2+) contacts are provided by D138 and D139. N-linked (GlcNAc...) asparagine glycans are attached at residues N176, N238, and N381. T638 is subject to Phosphothreonine. The tract at residues 691 to 1533 (SYEIYEPPAP…PDTIAAWYLR (843 aa)) is b. Y692 and Y725 each carry sulfotyrosine. A propeptide spans 737–1533 (SFKNSSLNPE…PDTIAAWYLR (797 aa)) (activation peptide (connecting region)). N-linked (GlcNAc...) asparagine glycosylation occurs at N841. 3 disordered regions span residues 884 to 904 (PAGK…MKSE), 947 to 1045 (DVDK…FPDR), and 1059 to 1144 (ETAL…YDLS). Positions 892 to 908 (SNPKNSYSGMKSEEDIP) are 1 X 17 AA tandem repeats. Residues 892 to 911 (SNPKNSYSGMKSEEDIPSEL) form a 1-1 repeat. At S903 the chain carries Phosphoserine. Residues 951 to 975 (LTNSPQNQNITVPRGESTSHTNTTR) are compositionally biased toward polar residues. N-linked (GlcNAc...) asparagine glycosylation is found at N959 and N972. The span at 1010-1021 (RTRKKKKNKKLA) shows a compositional bias: basic residues. 2 stretches are compositionally biased toward polar residues: residues 1059-1099 (ETAL…SLDL) and 1120-1134 (THST…SPPE). A run of 32 repeats spans residues 1175–1183 (IPSSDLSLF), 1184–1192 (TISPELDQT), 1193–1201 (IIYPDLDQL), 1202–1210 (LLSPEDNQK), 1211–1219 (TSSPDLGQV), 1220–1228 (PLSPDDNQK), 1229–1237 (TSSPDLGQV), 1238–1246 (SLSPDDNQK), 1247–1255 (TSSPDLGQV), 1256–1264 (PLSLDDNQK), 1265–1273 (TTSPDLGQV), 1274–1282 (PLSPDDNQM), 1283–1291 (ITSPDLGQV), 1292–1299 (PLSSDNQK), 1300–1308 (TSSPDLGQV), 1309–1316 (PLFPEDNQ), 1317–1325 (NYFLDLSQV), 1326–1334 (PLSSDQNQE), 1335–1341 (TSSTDLL), 1342–1350 (TLSPDFGQT), 1351–1359 (VLSPDLDQL), 1360–1368 (PLPSDNSQV), 1369–1377 (TVSPDLSLL), 1378–1386 (TLSPDFNEI), 1387–1395 (ILAPDLGQV), 1396–1404 (TLSPDLIQT), 1405–1413 (NPALNHGHK), 1414–1422 (ASSADPDQA), 1423–1431 (SYPPDSGQA), 1432–1440 (SSLPELNRT), 1441–1449 (LPHPDLTHI), and 1452–1461 (PSPSPTLNNT). The segment at 1175–1461 (IPSSDLSLFT…PSPSPTLNNT (287 aa)) is 32 X 9 AA approximate tandem repeats of [TNP]-L-S-P-D-L-S-Q-T. Positions 1204-1312 (SPEDNQKTSS…PDLGQVPLFP (109 aa)) are disordered. A compositionally biased stretch (polar residues) spans 1228-1251 (KTSSPDLGQVSLSPDDNQKTSSPD). Residues 1292 to 1304 (PLSSDNQKTSSPD) are compositionally biased toward polar residues. Residues 1403-1462 (QTNPALNHGHKASSADPDQASYPPDSGQASSLPELNRTLPHPDLTHIPPPSPSPTLNNTS) are disordered. An N-linked (GlcNAc...) asparagine glycan is attached at N1438. 2 Plastocyanin-like domains span residues 1538-1711 (HKKF…LLIC) and 1721-1866 (NLPM…DKEC). One can recognise an F5/8 type A 3 domain in the interval 1538 to 1866 (HKKFYYIAAE…TPFLIIDKEC (329 aa)). The Cu cation site is built by H1802 and H1804. Residue N1811 is glycosylated (N-linked (GlcNAc...) asparagine). 2 F5/8 type C domains span residues 1866-2020 (CKMP…LQGC) and 2025-2180 (CSTP…LFGC). 2 disulfides stabilise this stretch: C1866–C2020 and C2025–C2180.

This sequence belongs to the multicopper oxidase family. In terms of assembly, factor Va, the activated form of factor V, is composed of a heavy chain and a light chain, non-covalently bound. The interaction between the two chains is calcium-dependent. Forms heterodimer with SERPINA5. In terms of processing, thrombin activates factor V proteolytically to the active cofactor, factor Va (formation of a heavy chain at the N-terminus and a light chain at the C-terminus). Post-translationally, sulfation is required for efficient thrombin cleavage and activation and for full procoagulant activity. Activated protein C inactivates factor V and factor Va by proteolytic degradation.

The protein localises to the secreted. With respect to regulation, inhibited by SERPINA5. Functionally, central regulator of hemostasis. It serves as a critical cofactor for the prothrombinase activity of factor Xa that results in the activation of prothrombin to thrombin. The protein is Coagulation factor V (F5) of Mus musculus (Mouse).